Reading from the N-terminus, the 333-residue chain is Ribosomal RNA small subunit methyltransferase H (333 aa).

Residues 34–36, D59, F86, D112, and Q119 each bind S-adenosyl-L-methionine; that span reads GGH.

It belongs to the methyltransferase superfamily. RsmH family.

Its subcellular location is the cytoplasm. The enzyme catalyses cytidine(1402) in 16S rRNA + S-adenosyl-L-methionine = N(4)-methylcytidine(1402) in 16S rRNA + S-adenosyl-L-homocysteine + H(+). Specifically methylates the N4 position of cytidine in position 1402 (C1402) of 16S rRNA. This is Ribosomal RNA small subunit methyltransferase H from Prosthecochloris aestuarii (strain DSM 271 / SK 413).